Here is a 436-residue protein sequence, read N- to C-terminus: T-box transcription factor TBX6 (436 aa).

A DNA-binding region (T-box) is located at residues 100 to 273 (LWKEFSSVGT…ANPFAKGFRE (174 aa)). Residues 271–284 (FRENGRNCKRERDA) are compositionally biased toward basic and acidic residues. 2 disordered regions span residues 271–339 (FREN…APAP) and 360–379 (PSHL…SGRS). A compositionally biased stretch (low complexity) spans 325-339 (EQAPAPGEATAAPAP).

Forms a dimeric complex with DNA (in vitro). Expressed in fetal tail bud, posterior spinal tissue, intervertebral disk and testis. Also expressed in adult testis, kidney, lung, muscle and thymus.

The protein localises to the nucleus. Functionally, T-box transcription factor that plays an essential role in the determination of the fate of axial stem cells: neural vs mesodermal. Acts in part by down-regulating, a specific enhancer (N1) of SOX2, to inhibit neural development. Seems to play also an essential role in left/right axis determination and acts through effects on Notch signaling around the node as well as through an effect on the morphology and motility of the nodal cilia. The protein is T-box transcription factor TBX6 (TBX6) of Homo sapiens (Human).